The sequence spans 669 residues: UvrABC system protein C (669 aa).

Residues 16 to 95 enclose the GIY-YIG domain; sequence TNPGVYRFRD…IKEFKPRFNV (80 aa). The 36-residue stretch at 207–242 folds into the UVR domain; that stretch reads KRFIGRLEKDMAAAVAELDYERAARVRDDIIALRKV.

This sequence belongs to the UvrC family. As to quaternary structure, interacts with UvrB in an incision complex.

The protein localises to the cytoplasm. Its function is as follows. The UvrABC repair system catalyzes the recognition and processing of DNA lesions. UvrC both incises the 5' and 3' sides of the lesion. The N-terminal half is responsible for the 3' incision and the C-terminal half is responsible for the 5' incision. In Arthrobacter sp. (strain FB24), this protein is UvrABC system protein C.